We begin with the raw amino-acid sequence, 553 residues long: Fusion glycoprotein F0 (553 aa).

A signal peptide spans 1-31; sequence MGSRPFTKNPAPMMLTIRVALVLSCICPANS. The Extracellular segment spans residues 31 to 500; sequence SIDGRPFAAA…VNVKLTSTSA (470 aa). Disulfide bonds link Cys-76–Cys-199, Cys-338–Cys-347, Cys-362–Cys-370, Cys-394–Cys-399, and Cys-401–Cys-424. N-linked (GlcNAc...) asparagine; by host glycans are attached at residues Asn-85 and Asn-191. Asn-366 carries N-linked (GlcNAc...) asparagine; by host glycosylation. Residues Asn-447 and Asn-471 are each glycosylated (N-linked (GlcNAc...) asparagine; by host). A coiled-coil region spans residues 463 to 499; it reads ISTELGNVNNSISNALNKLEESNRKLDKVNVKLTSTS. The chain crosses the membrane as a helical span at residues 501–521; sequence LITYIVLTIISLVFGILSLIL. At 522 to 553 the chain is on the cytoplasmic side; it reads ACYLMYKQKAQQKTLLWLGNNTLDQMRATTKM. Cys-523 carries the S-palmitoyl cysteine; by host lipid modification.

Belongs to the paramyxoviruses fusion glycoprotein family. As to quaternary structure, homotrimer of disulfide-linked F1-F2. Post-translationally, the inactive precursor F0 is glycosylated and proteolytically cleaved into F1 and F2 to be functionally active. The cleavage is mediated by cellular proteases during the transport and maturation of the polypeptide.

Its subcellular location is the virion membrane. The protein resides in the host cell membrane. Class I viral fusion protein. Under the current model, the protein has at least 3 conformational states: pre-fusion native state, pre-hairpin intermediate state, and post-fusion hairpin state. During viral and plasma cell membrane fusion, the heptad repeat (HR) regions assume a trimer-of-hairpins structure, positioning the fusion peptide in close proximity to the C-terminal region of the ectodomain. The formation of this structure appears to drive apposition and subsequent fusion of viral and plasma cell membranes. Directs fusion of viral and cellular membranes leading to delivery of the nucleocapsid into the cytoplasm. This fusion is pH independent and occurs directly at the outer cell membrane. The trimer of F1-F2 (F protein) probably interacts with HN at the virion surface. Upon HN binding to its cellular receptor, the hydrophobic fusion peptide is unmasked and interacts with the cellular membrane, inducing the fusion between cell and virion membranes. Later in infection, F proteins expressed at the plasma membrane of infected cells could mediate fusion with adjacent cells to form syncytia, a cytopathic effect that could lead to tissue necrosis. This Gallus gallus (Chicken) protein is Fusion glycoprotein F0 (F).